Consider the following 399-residue polypeptide: Protochlorophyllide reductase, chloroplastic (399 aa).

The transit peptide at 1–64 directs the protein to the chloroplast; it reads MALQTASMLP…RQKVGAVRAE (64 aa).

It belongs to the short-chain dehydrogenases/reductases (SDR) family. POR subfamily.

Its subcellular location is the plastid. It is found in the chloroplast. The catalysed reaction is chlorophyllide a + NADP(+) = protochlorophyllide a + NADPH + H(+). It functions in the pathway porphyrin-containing compound metabolism; chlorophyll biosynthesis. Phototransformation of protochlorophyllide (Pchlide) to chlorophyllide (Chlide). The chain is Protochlorophyllide reductase, chloroplastic (3PCR) from Pisum sativum (Garden pea).